A 193-amino-acid polypeptide reads, in one-letter code: Putative RNA methyltransferase At5g10620 (193 aa).

S-adenosyl-L-methionine is bound by residues L110, G142, and 161 to 166 (LSSMVL).

The protein belongs to the RNA methyltransferase RlmH family.

The polypeptide is Putative RNA methyltransferase At5g10620 (Arabidopsis thaliana (Mouse-ear cress)).